The sequence spans 70 residues: uncharacterized protein (70 aa).

The helical transmembrane segment at 4-24 threads the bilayer; sequence VKTIAMLAMLVIVAALIYMGY.

It is found in the host membrane. This is an uncharacterized protein from Dryophytes versicolor (chameleon treefrog).